Consider the following 446-residue polypeptide: Putative diacyglycerol O-acyltransferase MT3481 (446 aa).

Residue H129 is the Proton acceptor of the active site. Residues 425–446 are disordered; the sequence is SRALPSAARRGRPSVPTARARH.

Belongs to the long-chain O-acyltransferase family.

It carries out the reaction an acyl-CoA + a 1,2-diacyl-sn-glycerol = a triacyl-sn-glycerol + CoA. The protein operates within glycerolipid metabolism; triacylglycerol biosynthesis. The chain is Putative diacyglycerol O-acyltransferase MT3481 from Mycobacterium tuberculosis (strain CDC 1551 / Oshkosh).